The chain runs to 202 residues: Na(+)-translocating NADH-quinone reductase subunit E (202 aa).

6 helical membrane-spanning segments follow: residues 11 to 31 (AIFV…FLAI), 35 to 55 (IEAA…TVPV), 81 to 101 (FLGL…MEMV), 114 to 134 (GVFL…LFMV), 144 to 164 (LVYG…LAGI), and 180 to 200 (LGIT…FSGI).

It belongs to the NqrDE/RnfAE family. Composed of six subunits; NqrA, NqrB, NqrC, NqrD, NqrE and NqrF.

It localises to the cell inner membrane. The enzyme catalyses a ubiquinone + n Na(+)(in) + NADH + H(+) = a ubiquinol + n Na(+)(out) + NAD(+). Its function is as follows. NQR complex catalyzes the reduction of ubiquinone-1 to ubiquinol by two successive reactions, coupled with the transport of Na(+) ions from the cytoplasm to the periplasm. NqrA to NqrE are probably involved in the second step, the conversion of ubisemiquinone to ubiquinol. This Marinobacter nauticus (strain ATCC 700491 / DSM 11845 / VT8) (Marinobacter aquaeolei) protein is Na(+)-translocating NADH-quinone reductase subunit E.